The sequence spans 746 residues: MQKAMKMVKDEDGPLNAAAKSIPSFPHCLQPEASRGKAPQRHPFPEALRGPFSQFRYEPSPGDLDGFPEVFEGGGSRKRKSMPTKVPYTHPAEEASIAQESKSLGPPNLTLLFPQPQRPKCDSQMIDLCNVGLQFYRTLEHLGGKPVKQEPVKPSAMWPQPTPPAFLPAPYPYYPKVHPGLMFPFFVPSSSPFPFSRHTFLPKQPPEPVLPRKVEPLESEETKQKVERVDVNVQIDDSYYVDVGGAQKRWQCPTCEKSYTSKYNLVTHILGHSGIKPHACSRCGKLFKQLSHLHTHMLTHQGTRPHKCQVCHKAFTQTSHLKRHMMQHSEVKPHNCRVCSRGFAYPSELKAHEAKHASGRENICVECGLDFPTLAQLKRHLTTHRGPIQYNCSECDKTFQYPSQLQNHMMKHKDIRPYICSECGMEFVQPHHLKQHSLTHKGVKEHKCGICGREFTLLANMKRHVLIHTNIRAYQCHLCYKSFVQKQTLKAHMIVHSDVKPFKCKLCGKEFNRMHNLMGHLHLHSDSKPFKCLYCPSKFTLKGNLTRHMKVKHGVMERGLHSQGLGRGRLVLVQSAGVLRNLEQEEPFDLSQKRSANGPMFQSDVDSTQDCLCQEEEEEAGEEDNCYEVEPYSPSLAPESQQLCAPEDLSTKQEQTLQDPGEGCRDQDAPEEQQEDRSEDHEGSDIDCEGKDIDCAIREERLSSRLLQSGGQGPSFSDYLYFKHRDEGLKELLERKMEKQAVLLGI.

A disordered region spans residues 1-64 (MQKAMKMVKD…FRYEPSPGDL (64 aa)). 11 consecutive C2H2-type zinc fingers follow at residues 250 to 272 (WQCP…ILGH), 278 to 300 (HACS…MLTH), 306 to 328 (HKCQ…MMQH), 334 to 356 (HNCR…EAKH), 362 to 384 (NICV…LTTH), 390 to 412 (YNCS…MMKH), 418 to 440 (YICS…SLTH), 446 to 468 (HKCG…VLIH), 474 to 496 (YQCH…MIVH), 502 to 524 (FKCK…LHLH), and 530 to 553 (FKCL…KVKH). The interval 452–746 (GREFTLLANM…MEKQAVLLGI (295 aa)) is interaction with NRIP1. A PXDLS motif is present at residues 587-591 (PFDLS). The tract at residues 587 to 689 (PFDLSQKRSA…DHEGSDIDCE (103 aa)) is disordered. A compositionally biased stretch (acidic residues) spans 613-627 (CQEEEEEAGEEDNCY). Residues 675 to 689 (EDRSEDHEGSDIDCE) are compositionally biased toward basic and acidic residues.

As to quaternary structure, interacts with ESR1 and NRIP1. Interacts (via PXDLS motif) with CTBP1. Expressed in immature and mature dendritic cells (DCs).

It is found in the nucleus. Functionally, has transcriptional repression activity. Acts as a corepressor of ESR1; the function seems to involve CTBP1 and histone deacetylases. The protein is Zinc finger protein 366 of Mus musculus (Mouse).